Reading from the N-terminus, the 345-residue chain is Eukaryotic translation initiation factor 3 subunit F (345 aa).

Residues 30–166 (VVIQPQAIFS…TRAYISAPVG (137 aa)) form the MPN domain. The tract at residues 310–345 (EGASAEAGAQRGQRGGRGGRGGQQRTQERASEEVRA) is disordered. The segment covering 312–321 (ASAEAGAQRG) has biased composition (low complexity). Residues 322–331 (QRGGRGGRGG) are compositionally biased toward gly residues. Positions 335 to 345 (TQERASEEVRA) are enriched in basic and acidic residues.

This sequence belongs to the eIF-3 subunit F family. As to quaternary structure, component of the eukaryotic translation initiation factor 3 (eIF-3) complex.

The protein resides in the cytoplasm. Component of the eukaryotic translation initiation factor 3 (eIF-3) complex, which is involved in protein synthesis of a specialized repertoire of mRNAs and, together with other initiation factors, stimulates binding of mRNA and methionyl-tRNAi to the 40S ribosome. The eIF-3 complex specifically targets and initiates translation of a subset of mRNAs involved in cell proliferation. In Neosartorya fischeri (strain ATCC 1020 / DSM 3700 / CBS 544.65 / FGSC A1164 / JCM 1740 / NRRL 181 / WB 181) (Aspergillus fischerianus), this protein is Eukaryotic translation initiation factor 3 subunit F.